The chain runs to 273 residues: Putative pyruvate, phosphate dikinase regulatory protein (273 aa).

An ADP-binding site is contributed by 153–160 (GVSRTSKT).

This sequence belongs to the pyruvate, phosphate/water dikinase regulatory protein family. PDRP subfamily.

The enzyme catalyses N(tele)-phospho-L-histidyl/L-threonyl-[pyruvate, phosphate dikinase] + ADP = N(tele)-phospho-L-histidyl/O-phospho-L-threonyl-[pyruvate, phosphate dikinase] + AMP + H(+). It catalyses the reaction N(tele)-phospho-L-histidyl/O-phospho-L-threonyl-[pyruvate, phosphate dikinase] + phosphate + H(+) = N(tele)-phospho-L-histidyl/L-threonyl-[pyruvate, phosphate dikinase] + diphosphate. Bifunctional serine/threonine kinase and phosphorylase involved in the regulation of the pyruvate, phosphate dikinase (PPDK) by catalyzing its phosphorylation/dephosphorylation. This chain is Putative pyruvate, phosphate dikinase regulatory protein, found in Rhizobium meliloti (strain 1021) (Ensifer meliloti).